We begin with the raw amino-acid sequence, 287 residues long: Large ribosomal subunit protein uL2 (287 aa).

The tract at residues 221–287 (RGSVMNPCDH…SKRSRGGRDS (67 aa)) is disordered. Basic residues predominate over residues 258-287 (KTRKRNKPSNRYVLRKRRKTSKRSRGGRDS).

The protein belongs to the universal ribosomal protein uL2 family. In terms of assembly, part of the 50S ribosomal subunit. Forms a bridge to the 30S subunit in the 70S ribosome.

One of the primary rRNA binding proteins. Required for association of the 30S and 50S subunits to form the 70S ribosome, for tRNA binding and peptide bond formation. It has been suggested to have peptidyltransferase activity; this is somewhat controversial. Makes several contacts with the 16S rRNA in the 70S ribosome. This chain is Large ribosomal subunit protein uL2, found in Parasynechococcus marenigrum (strain WH8102).